Here is a 364-residue protein sequence, read N- to C-terminus: MQDRQKAQDYRALLLADTPLIDVRAPIEFEQGAMPGAINLPLMMGDERAAVGTCYKRQGADAALALGHRLVCGDIRQQRLEAWKAAYQRFPNGYLCCARGGQRSHIVQRWLKETGIDCPLIEGGYKALRQTAIQATWQLAQKPILLIGGCTGSGKTQLVRQQPNGVDLEGLARHRGSSFGRTLKPQLSQASFENKLAVELLKINARQTLKRWVLEDEGRTIGANHLPECLRERMAQAPIAVVEDPFALRLERLREEYFIRMHHDFTHAYGDEAGWQAYSEYLHHGLFAIRRRLGLQRFAELTDTLDRALAEQLSSGSTDGHMAWLVPLLNEYYDPMYRYQLEKKAANIVFRGPWQDVANWLKAQ.

The Rhodanese domain occupies 14 to 137 (LLADTPLIDV…LRQTAIQATW (124 aa)). The active-site S-selanylcysteine intermediate is Cys-97.

This sequence belongs to the SelU family. In terms of assembly, monomer.

The enzyme catalyses 5-methylaminomethyl-2-thiouridine(34) in tRNA + selenophosphate + (2E)-geranyl diphosphate + H2O + H(+) = 5-methylaminomethyl-2-selenouridine(34) in tRNA + (2E)-thiogeraniol + phosphate + diphosphate. It carries out the reaction 5-methylaminomethyl-2-thiouridine(34) in tRNA + (2E)-geranyl diphosphate = 5-methylaminomethyl-S-(2E)-geranyl-thiouridine(34) in tRNA + diphosphate. The catalysed reaction is 5-methylaminomethyl-S-(2E)-geranyl-thiouridine(34) in tRNA + selenophosphate + H(+) = 5-methylaminomethyl-2-(Se-phospho)selenouridine(34) in tRNA + (2E)-thiogeraniol. It catalyses the reaction 5-methylaminomethyl-2-(Se-phospho)selenouridine(34) in tRNA + H2O = 5-methylaminomethyl-2-selenouridine(34) in tRNA + phosphate. In terms of biological role, involved in the post-transcriptional modification of the uridine at the wobble position (U34) of tRNA(Lys), tRNA(Glu) and tRNA(Gln). Catalyzes the conversion of 2-thiouridine (S2U-RNA) to 2-selenouridine (Se2U-RNA). Acts in a two-step process involving geranylation of 2-thiouridine (S2U) to S-geranyl-2-thiouridine (geS2U) and subsequent selenation of the latter derivative to 2-selenouridine (Se2U) in the tRNA chain. This is tRNA 2-selenouridine synthase from Salmonella paratyphi B (strain ATCC BAA-1250 / SPB7).